The chain runs to 171 residues: Odorant-binding protein 1b (171 aa).

An N-terminal signal peptide occupies residues 1 to 19 (MMVKFLLLALVFGLAHVHA). Cystine bridges form between Cys57/Cys61 and Cys76/Cys169.

This sequence belongs to the calycin superfamily. Lipocalin family. In terms of assembly, may form a heterodimer with OBP1A. Post-translationally, the N-terminus may be blocked. In terms of tissue distribution, expressed in nasal mucosa (at protein level). Specifically detected in septal and lateral nasal glands.

Its subcellular location is the secreted. Its function is as follows. Binds the chemical odorant 2-isobutyl-3-methoxypyrazine. This chain is Odorant-binding protein 1b, found in Mus musculus (Mouse).